We begin with the raw amino-acid sequence, 461 residues long: MNMQESKSIIEVNGVSKFFGEKTALDHVTLNVKKGEFVTILGPSGCGKTTLLRLIAGFQTASEGEIKISGKEITQTPPHKRPVNTVFQKYALFPHLNVYDNIAFGLKLKKMPKQTIEKKVKAALKMVGMTDYEYRDVDSLSGGQQQRVAIARAIVNEPEVLLLDEPLAALDLKMRKDMQMELKEMHKSLGITFVYVTHDQEEALTLSDTIVVMSEGRIQQIGTPIDIYNEPINSFVADFIGESNILNGVMIHDKLVRFCNTEFECVDEGFGENMPVDVVIRPEDLYIFPVSEAAQLTGVVQSSVFKGVHYEMTVLCNGYEFLVQDYHHFEVGALVGLLVKPFDIHIMKKERVCNTFEGKLIDETHVEFLGCNFECAPVTGIEAGSEVKVEVGFDNVILQDNEEDGALTGEVKFILYKGDHYHLTVLSDWDENVFVDTNDVWDDGDRVGITIPPDGIRVIKN.

Positions 10-240 (IEVNGVSKFF…PINSFVADFI (231 aa)) constitute an ABC transporter domain. ATP is bound at residue 42 to 49 (GPSGCGKT).

This sequence belongs to the ABC transporter superfamily. Spermidine/putrescine importer (TC 3.A.1.11.1) family. As to quaternary structure, the complex is composed of two ATP-binding proteins (PotA), two transmembrane proteins (PotB and PotC) and a solute-binding protein (PotD).

It is found in the cell inner membrane. The catalysed reaction is ATP + H2O + polyamine-[polyamine-binding protein]Side 1 = ADP + phosphate + polyamineSide 2 + [polyamine-binding protein]Side 1.. Part of the ABC transporter complex PotABCD involved in spermidine/putrescine import. Responsible for energy coupling to the transport system. This Bacteroides fragilis (strain YCH46) protein is Spermidine/putrescine import ATP-binding protein PotA.